Here is a 157-residue protein sequence, read N- to C-terminus: Transcription elongation factor GreA (157 aa).

Residues 1–75 are a coiled coil; sequence MSKEIILTQE…VETLINRAKV (75 aa).

The protein belongs to the GreA/GreB family.

Functionally, necessary for efficient RNA polymerase transcription elongation past template-encoded arresting sites. The arresting sites in DNA have the property of trapping a certain fraction of elongating RNA polymerases that pass through, resulting in locked ternary complexes. Cleavage of the nascent transcript by cleavage factors such as GreA or GreB allows the resumption of elongation from the new 3'terminus. GreA releases sequences of 2 to 3 nucleotides. The polypeptide is Transcription elongation factor GreA (Mycoplasma capricolum subsp. capricolum (strain California kid / ATCC 27343 / NCTC 10154)).